A 523-amino-acid chain; its full sequence is Transmembrane protein 266 (523 aa).

The Cytoplasmic segment spans residues 1–94 (MTNPQPAIEG…VFLLSASLNS (94 aa)). Residues 95-115 (FLVACVILVVILLTLELLIDI) form a helical membrane-spanning segment. Residues 116 to 121 (KLLQFS) are Extracellular-facing. Residues 122 to 142 (SAFQFAGVIHWISLVILSVFF) traverse the membrane as a helical segment. The Cytoplasmic portion of the chain corresponds to 143–161 (SETVLRIVVLGIWDYIENK). The helical transmembrane segment at 162–182 (IEVFDGAVIILSLAPMVASTV) threads the bilayer. Residues 183–191 (ANGPRSPWD) lie on the Extracellular side of the membrane. The chain crosses the membrane as a helical span at residues 192–212 (AISLIIMLRIWRVKRVIDAYV). The Cytoplasmic portion of the chain corresponds to 213–523 (LPVKLEMEMV…EQKLHRVPEA (311 aa)). A coiled-coil region spans residues 218-270 (EMEMVIQQYEKAKVIQDEQLERLTQICQEQGFEIRQLRAHLAQQDLDLAAERE). Residues 380-477 (SASRSSVTRA…PELEHRVSLF (98 aa)) are disordered. Residues 382 to 397 (SRSSVTRAQSDSSQTL) show a composition bias toward low complexity. The span at 398-411 (GSSMDCSTAREEPS) shows a compositional bias: polar residues. Positions 421-430 (LPSQQQVEEA) are enriched in pro residues.

In terms of assembly, homodimer; disulfide-linked. As to expression, mainly expressed in the cerebellum. Also expressed in cerebral cortex, skeletal muscle and thyroid, but at much lower levels.

It localises to the cell membrane. Its subcellular location is the cell projection. The protein resides in the dendrite. It is found in the perikaryon. In terms of biological role, voltage-sensor protein present on the post-synaptic side of glutamatergic mossy fibers and granule cells in the cerebellum. Despite the presence of a voltage-sensor segment, does not form a functional ion channel and its precise role remains unclear. Undergoes both rapid and slow structural rearrangements in response to changes in voltage. Contains a zinc-binding site that can regulate the slow conformational transition. This is Transmembrane protein 266 from Homo sapiens (Human).